The following is a 132-amino-acid chain: Large ribosomal subunit protein bL12 (132 aa).

Residues 112-132 (KEAADKAKTQLEGAGGTINLK) form a disordered region.

Belongs to the bacterial ribosomal protein bL12 family. In terms of assembly, homodimer. Part of the ribosomal stalk of the 50S ribosomal subunit. Forms a multimeric L10(L12)X complex, where L10 forms an elongated spine to which 2 to 4 L12 dimers bind in a sequential fashion. Binds GTP-bound translation factors.

Its function is as follows. Forms part of the ribosomal stalk which helps the ribosome interact with GTP-bound translation factors. Is thus essential for accurate translation. This Leifsonia xyli subsp. xyli (strain CTCB07) protein is Large ribosomal subunit protein bL12.